We begin with the raw amino-acid sequence, 347 residues long: Anthranilate phosphoribosyltransferase (347 aa).

5-phospho-alpha-D-ribose 1-diphosphate-binding positions include G86, 89-90 (GD), T94, 96-99 (NIST), 114-122 (KHGNRSVSS), and S126. G86 contributes to the anthranilate binding site. Residue S98 coordinates Mg(2+). N117 serves as a coordination point for anthranilate. Anthranilate is bound at residue R172. Residues D230 and E231 each coordinate Mg(2+).

This sequence belongs to the anthranilate phosphoribosyltransferase family. As to quaternary structure, homodimer. The cofactor is Mg(2+).

The enzyme catalyses N-(5-phospho-beta-D-ribosyl)anthranilate + diphosphate = 5-phospho-alpha-D-ribose 1-diphosphate + anthranilate. It functions in the pathway amino-acid biosynthesis; L-tryptophan biosynthesis; L-tryptophan from chorismate: step 2/5. Functionally, catalyzes the transfer of the phosphoribosyl group of 5-phosphorylribose-1-pyrophosphate (PRPP) to anthranilate to yield N-(5'-phosphoribosyl)-anthranilate (PRA). The sequence is that of Anthranilate phosphoribosyltransferase from Shewanella frigidimarina (strain NCIMB 400).